Consider the following 375-residue polypeptide: Phosphate acyltransferase (375 aa).

A disordered region spans residues 354–375 (AQDDATSADADAPGDSETGSTN). The span at 356–368 (DDATSADADAPGD) shows a compositional bias: low complexity.

Belongs to the PlsX family. In terms of assembly, homodimer. Probably interacts with PlsY.

It localises to the cytoplasm. The catalysed reaction is a fatty acyl-[ACP] + phosphate = an acyl phosphate + holo-[ACP]. Its pathway is lipid metabolism; phospholipid metabolism. In terms of biological role, catalyzes the reversible formation of acyl-phosphate (acyl-PO(4)) from acyl-[acyl-carrier-protein] (acyl-ACP). This enzyme utilizes acyl-ACP as fatty acyl donor, but not acyl-CoA. This Ruegeria sp. (strain TM1040) (Silicibacter sp.) protein is Phosphate acyltransferase.